We begin with the raw amino-acid sequence, 127 residues long: Holo-[acyl-carrier-protein] synthase (127 aa).

Mg(2+) contacts are provided by Asp-8 and Glu-56.

It belongs to the P-Pant transferase superfamily. AcpS family. Mg(2+) serves as cofactor.

It localises to the cytoplasm. The enzyme catalyses apo-[ACP] + CoA = holo-[ACP] + adenosine 3',5'-bisphosphate + H(+). Transfers the 4'-phosphopantetheine moiety from coenzyme A to a Ser of acyl-carrier-protein. The protein is Holo-[acyl-carrier-protein] synthase of Caldanaerobacter subterraneus subsp. tengcongensis (strain DSM 15242 / JCM 11007 / NBRC 100824 / MB4) (Thermoanaerobacter tengcongensis).